A 271-amino-acid polypeptide reads, in one-letter code: Protein FAM110D (271 aa).

Disordered stretches follow at residues 1–83 (MLLA…RPDS), 116–145 (PRDA…APEA), and 186–245 (PQSW…PVSV). Residues 68-78 (RPVRRGSGRRL) show a composition bias toward basic residues. Positions 116–126 (PRDAAPSSPAS) are enriched in low complexity. The span at 220 to 231 (SPGGAGGGGGSE) shows a compositional bias: gly residues.

This sequence belongs to the FAM110 family.

The protein is Protein FAM110D (FAM110D) of Homo sapiens (Human).